The following is a 785-amino-acid chain: Gamma-interferon-inducible protein 16 (785 aa).

Residues 5-92 enclose the Pyrin domain; it reads YKNIVLLKGL…KKEKLKAKGL (88 aa). Residue Lys-45 is modified to N6-acetyllysine. The span at 88–99 shows a compositional bias: basic residues; the sequence is KAKGLAPSRKRK. The tract at residues 88 to 196 is disordered; the sequence is KAKGLAPSRK…TVAKCQATPR (109 aa). Ser-95 is modified (phosphoserine). The short motif at 96–100 is the Nuclear localization signal element; the sequence is RKRKK. Lys-99 carries the post-translational modification N6-acetyllysine. A compositionally biased stretch (low complexity) spans 104-114; it reads AASPAPSTSST. Ser-106 bears the Phosphoserine mark. Lys-116 participates in a covalent cross-link: Glycyl lysine isopeptide (Lys-Gly) (interchain with G-Cter in SUMO2). An N6-acetyllysine; alternate modification is found at Lys-128. Lys-128 is covalently cross-linked (Glycyl lysine isopeptide (Lys-Gly) (interchain with G-Cter in SUMO2); alternate). Short sequence motifs (nuclear localization signal) lie at residues 128–131, 134–136, and 140–143; these read KRKK, KEK, and KGSK. Residues 166-182 are compositionally biased toward low complexity; that stretch reads SPSPKTSSSAPPNTSST. 2 positions are modified to phosphoserine: Ser-168 and Ser-174. Residues 192 to 393 form an interaction with TP53 C-terminus region; sequence QATPRRSVLQ…SFIQIKKKTN (202 aa). Positions 193 to 393 constitute an HIN-200 1 domain; sequence ATPRRSVLQK…SFIQIKKKTN (201 aa). N6-acetyllysine is present on Lys-214. Positions 388–442 are disordered; it reads IKKKTNPRNNDPKSMKLPQEQSQLPNPSEAGTTFPESHLWTPQMPPTTPSSSFFT. Residues 406-422 show a composition bias toward polar residues; the sequence is QEQSQLPNPSEAGTTFP. Lys-444 and Lys-451 each carry N6-acetyllysine. The HIN-200 2 domain occupies 566–765; that stretch reads EVSIEDSAQS…SHIKVIKTRK (200 aa). The interaction with TP53 core domain stretch occupies residues 571–766; it reads DSAQSDLKEV…HIKVIKTRKN (196 aa). A Phosphoserine modification is found at Ser-575. Residues Lys-598 and Lys-614 each carry the N6-acetyllysine modification. Lys-683 is covalently cross-linked (Glycyl lysine isopeptide (Lys-Gly) (interchain with G-Cter in SUMO2)). A Phosphoserine modification is found at Ser-780.

This sequence belongs to the HIN-200 family. As to quaternary structure, forms homooligomers. Interacts with TMEM173, AIM2, PYCARD and CASP1. Interacts with BRCA1, TP53, E2F1, RB1 and SP1. Interacts with MTA1. Interacts with MTA1. Interacts with PYDC5. Lysine acetylation in the multipartite nuclear localization signal (NLS) regulates the subcellular location. In terms of processing, phosphorylated on Ser and Thr.

Its subcellular location is the nucleus. It localises to the cytoplasm. Its function is as follows. Binds double-stranded DNA. Binds preferentially to supercoiled DNA and cruciform DNA structures. Seems to be involved in transcriptional regulation. May function as a transcriptional repressor. Could have a role in the regulation of hematopoietic differentiation through activation of unknown target genes. Controls cellular proliferation by modulating the functions of cell cycle regulatory factors including p53/TP53 and the retinoblastoma protein. May be involved in TP53-mediated transcriptional activation by enhancing TP53 sequence-specific DNA binding and modulating TP53 phosphorylation status. Seems to be involved in energy-level-dependent activation of the ATM/ AMPK/TP53 pathway coupled to regulation of autophagy. May be involved in regulation of TP53-mediated cell death also involving BRCA1. May be involved in the senescence of prostate epithelial cells. Involved in innate immune response by recognizing viral dsDNA in the cytosol and probably in the nucleus. After binding to viral DNA in the cytoplasm recruits TMEM173/STING and mediates the induction of IFN-beta. Has anti-inflammatory activity and inhibits the activation of the AIM2 inflammasome, probably via association with AIM2. Proposed to bind viral DNA in the nucleus and to induce the formation of nuclear caspase-1-activating inflammasome formation via association with PYCARD. Inhibits replication of herpesviruses probably by interfering with promoter recruitment of members of the Sp1 family of transcription factors. The protein is Gamma-interferon-inducible protein 16 (IFI16) of Pongo abelii (Sumatran orangutan).